The primary structure comprises 266 residues: GTP cyclohydrolase III (266 aa).

The protein belongs to the archaeal-type GTP cyclohydrolase family.

The enzyme catalyses GTP + 3 H2O = 2-amino-5-formylamino-6-(5-phospho-D-ribosylamino)pyrimidin-4(3H)-one + 2 phosphate + 2 H(+). Catalyzes the formation of 2-amino-5-formylamino-6-ribofuranosylamino-4(3H)-pyrimidinone ribonucleotide monophosphate and inorganic phosphate from GTP. Also has an independent pyrophosphate phosphohydrolase activity. This Methanococcus maripaludis (strain C5 / ATCC BAA-1333) protein is GTP cyclohydrolase III.